The chain runs to 502 residues: Cytochrome P450 83A1 (502 aa).

Residues 1–21 traverse the membrane as a helical segment; sequence MEDIIIGVVALAAVLLFFLYQ. C442 is a heme binding site.

This sequence belongs to the cytochrome P450 family. Heme is required as a cofactor.

Its subcellular location is the endoplasmic reticulum membrane. The enzyme catalyses an (E)-omega-(methylsulfanyl)-alkanal oxime + glutathione + reduced [NADPH--hemoprotein reductase] + O2 = an S-[(1E)-1-(hydroxyimino)-omega-(methylsulfanyl)alkyl]-L-glutathione + oxidized [NADPH--hemoprotein reductase] + 2 H2O + H(+). Involved in the metabolism of aliphatic and aromatic oximes. Involved in the biosynthesis of both short-chain and long-chain aliphatic glucosinolates. The protein is Cytochrome P450 83A1 (CYP83A1) of Arabidopsis thaliana (Mouse-ear cress).